Reading from the N-terminus, the 365-residue chain is Putative 2-dehydropantoate 2-reductase (365 aa).

The protein belongs to the ketopantoate reductase family.

It carries out the reaction (R)-pantoate + NADP(+) = 2-dehydropantoate + NADPH + H(+). It functions in the pathway cofactor biosynthesis; (R)-pantothenate biosynthesis; (R)-pantoate from 3-methyl-2-oxobutanoate: step 2/2. Its function is as follows. Catalyzes the NADPH-dependent reduction of ketopantoate into pantoic acid. The sequence is that of Putative 2-dehydropantoate 2-reductase (KPR) from Arabidopsis thaliana (Mouse-ear cress).